Consider the following 364-residue polypeptide: tRNA/tmRNA (uracil-C(5))-methyltransferase (364 aa).

The S-adenosyl-L-methionine site is built by Gln188, Tyr216, Asn221, Glu237, and Asp297. Cys322 acts as the Nucleophile in catalysis. Glu356 functions as the Proton acceptor in the catalytic mechanism.

This sequence belongs to the class I-like SAM-binding methyltransferase superfamily. RNA M5U methyltransferase family. TrmA subfamily.

It catalyses the reaction uridine(54) in tRNA + S-adenosyl-L-methionine = 5-methyluridine(54) in tRNA + S-adenosyl-L-homocysteine + H(+). The catalysed reaction is uridine(341) in tmRNA + S-adenosyl-L-methionine = 5-methyluridine(341) in tmRNA + S-adenosyl-L-homocysteine + H(+). In terms of biological role, dual-specificity methyltransferase that catalyzes the formation of 5-methyluridine at position 54 (m5U54) in all tRNAs, and that of position 341 (m5U341) in tmRNA (transfer-mRNA). The sequence is that of tRNA/tmRNA (uracil-C(5))-methyltransferase from Mannheimia succiniciproducens (strain KCTC 0769BP / MBEL55E).